We begin with the raw amino-acid sequence, 335 residues long: MKTIVSGIQSTNSLTLGNYLGALKNFINLQNDNKMFIFIADMHSITVDFNPKELESNRKSVASIYAACGLDFDKNIIFYQSSVLAHTQLSYIITCHSYMGELSRMTQFKDKSQKTNANGTTNIPTGLFIYPCLMAADILLYDADLVPVGKDQKQHMELARDIAIRMNKKYKTNLFKIPEIYQSEMGAKIMDLVDPSIKMSKSNANTKGTIFLLDKVEDVRKKIMQAKTDSLNKVKYDVENQPGVSNLMTIYSCLTNKKTDEIEKEFENKNYGEFKTKVADAVCLLLEDIQKKYQIYFNSNEIEQKLEKNAKKCNEIVNKKINLVQQTLGLGTYKG.

Residues 9–11 and 17–18 contribute to the ATP site; these read QST and GN. Positions 10–18 match the 'HIGH' region motif; the sequence is STNSLTLGN. Position 137 (Asp-137) interacts with L-tryptophan. Residues 149 to 151, Ile-189, and 198 to 202 each bind ATP; these read GKD and KMSKS. Positions 198–202 match the 'KMSKS' region motif; that stretch reads KMSKS.

It belongs to the class-I aminoacyl-tRNA synthetase family. In terms of assembly, homodimer.

It localises to the cytoplasm. It carries out the reaction tRNA(Trp) + L-tryptophan + ATP = L-tryptophyl-tRNA(Trp) + AMP + diphosphate + H(+). Its function is as follows. Catalyzes the attachment of tryptophan to tRNA(Trp). This is Tryptophan--tRNA ligase from Malacoplasma penetrans (strain HF-2) (Mycoplasma penetrans).